The sequence spans 303 residues: Sulfate adenylyltransferase subunit 2 (303 aa).

Belongs to the PAPS reductase family. CysD subfamily. As to quaternary structure, heterodimer composed of CysD, the smaller subunit, and CysN.

The enzyme catalyses sulfate + ATP + H(+) = adenosine 5'-phosphosulfate + diphosphate. Its pathway is sulfur metabolism; hydrogen sulfide biosynthesis; sulfite from sulfate: step 1/3. Functionally, with CysN forms the ATP sulfurylase (ATPS) that catalyzes the adenylation of sulfate producing adenosine 5'-phosphosulfate (APS) and diphosphate, the first enzymatic step in sulfur assimilation pathway. APS synthesis involves the formation of a high-energy phosphoric-sulfuric acid anhydride bond driven by GTP hydrolysis by CysN coupled to ATP hydrolysis by CysD. The protein is Sulfate adenylyltransferase subunit 2 of Bacteroides fragilis (strain YCH46).